A 440-amino-acid chain; its full sequence is Glutamyl-tRNA reductase (440 aa).

Residues 50 to 53 (TCNR), serine 109, 114 to 116 (EPQ), and glutamine 120 contribute to the substrate site. Residue cysteine 51 is the Nucleophile of the active site. NADP(+) is bound at residue 189–194 (GAGEMA).

This sequence belongs to the glutamyl-tRNA reductase family. Homodimer.

The enzyme catalyses (S)-4-amino-5-oxopentanoate + tRNA(Glu) + NADP(+) = L-glutamyl-tRNA(Glu) + NADPH + H(+). It functions in the pathway porphyrin-containing compound metabolism; protoporphyrin-IX biosynthesis; 5-aminolevulinate from L-glutamyl-tRNA(Glu): step 1/2. Its function is as follows. Catalyzes the NADPH-dependent reduction of glutamyl-tRNA(Glu) to glutamate 1-semialdehyde (GSA). The chain is Glutamyl-tRNA reductase from Nitratidesulfovibrio vulgaris (strain ATCC 29579 / DSM 644 / CCUG 34227 / NCIMB 8303 / VKM B-1760 / Hildenborough) (Desulfovibrio vulgaris).